Here is a 120-residue protein sequence, read N- to C-terminus: Large ribosomal subunit protein eL8 (120 aa).

This sequence belongs to the eukaryotic ribosomal protein eL8 family. Part of the 50S ribosomal subunit. Probably part of the RNase P complex.

Its subcellular location is the cytoplasm. Multifunctional RNA-binding protein that recognizes the K-turn motif in ribosomal RNA, the RNA component of RNase P, box H/ACA, box C/D and box C'/D' sRNAs. The sequence is that of Large ribosomal subunit protein eL8 from Halorubrum lacusprofundi (strain ATCC 49239 / DSM 5036 / JCM 8891 / ACAM 34).